The following is a 475-amino-acid chain: MAAGALRGLAVAGGGESSESEDDGWEIGYLDRASQKLKGPLPIEEKNETFKKALTTGDISLVQELLDSGISVDSSFRYGWTPLMYAASVANVELVRVLLDRGANASFDKDKQTILITACSARGLEEQILKCVELLLSRNADPNVACRRLMTPIMYAARDGHPQVVALLVAHGAEVNTQDENGYTALTWAARQGHKNVVLKLLELGANKMLQTKDGKIPSEIAKRNKHLEIFNFLSLTLNPLEGNLQQLTKEETICKLLTTESDKEKDHLFSSYTAFGDLEIFLHGLGLEHMTDLLKEKDITLRHLLTMRKDEFTKNGINDKDQQKILSALKELEVEEIKFGELPEVAKLEISGDEFLNFLLKLNKQCGHLITAVQNIITELPVNSHKIVLEWASPRNFTSVCEELVNNVEDLSEEVCKLKDLIQKLQNERENDPTHIPLMEEVSTWNSRILKRTAIAVCGFGFLLFICKLTVQRK.

Over residues 1-10 (MAAGALRGLA) the composition is skewed to low complexity. The segment at 1–23 (MAAGALRGLAVAGGGESSESEDD) is disordered. A phosphoserine mark is found at serine 17, serine 18, and serine 20. 6 ANK repeats span residues 45-74 (EKNE…SVDS), 78-107 (YGWT…NASF), 110-144 (DKQT…DPNV), 148-177 (RLMT…EVNT), 181-210 (NGYT…NKML), and 214-243 (DGKI…PLEG). The SAM domain maps to 272–334 (SYTAFGDLEI…KILSALKELE (63 aa)).

In terms of assembly, interacts with DDX4, PIWIL1, RANBP9 and TDRD1.

The protein localises to the cytoplasm. Its function is as follows. Plays a central role during spermatogenesis by repressing transposable elements and preventing their mobilization, which is essential for the germline integrity. Acts via the piRNA metabolic process, which mediates the repression of transposable elements during meiosis by forming complexes composed of piRNAs and Piwi proteins and governs the methylation and subsequent repression of transposons. Its association with pi-bodies suggests a participation in the primary piRNAs metabolic process. Required prior to the pachytene stage to facilitate the production of multiple types of piRNAs, including those associated with repeats involved in the regulation of retrotransposons. May act by mediating protein-protein interactions during germ cell maturation. This Otolemur garnettii (Small-eared galago) protein is Ankyrin repeat, SAM and basic leucine zipper domain-containing protein 1 (ASZ1).